The sequence spans 513 residues: Putative GMP synthase [glutamine-hydrolyzing] (513 aa).

The Glutamine amidotransferase type-1 domain occupies 8 to 198; it reads MIVVLDFGGQ…AFAVCGCEGN (191 aa). Cys-85 (nucleophile) is an active-site residue. Residue Glu-174 is part of the active site. A GMPS ATP-PPase domain is found at 199 to 388; that stretch reads WSMENFIELE…LGIPDEVVWR (190 aa). ATP is bound at residue 226–232; sequence SGGVDSS.

As to quaternary structure, homodimer.

It catalyses the reaction XMP + L-glutamine + ATP + H2O = GMP + L-glutamate + AMP + diphosphate + 2 H(+). It functions in the pathway purine metabolism; GMP biosynthesis; GMP from XMP (L-Gln route): step 1/1. Functionally, catalyzes the synthesis of GMP from XMP. The sequence is that of Putative GMP synthase [glutamine-hydrolyzing] (guaA) from Halalkalibacterium halodurans (strain ATCC BAA-125 / DSM 18197 / FERM 7344 / JCM 9153 / C-125) (Bacillus halodurans).